The primary structure comprises 200 residues: Protein GrpE (200 aa).

Over residues 1–10 (MQEKDSKDVT) the composition is skewed to basic and acidic residues. The disordered stretch occupies residues 1 to 57 (MQEKDSKDVTMEDEETIASQEEIEVEGNSEESSKEEESNNSEISDENLSEENLKLKD). Residues 11–29 (MEDEETIASQEEIEVEGNS) are compositionally biased toward acidic residues.

This sequence belongs to the GrpE family. As to quaternary structure, homodimer.

Its subcellular location is the cytoplasm. In terms of biological role, participates actively in the response to hyperosmotic and heat shock by preventing the aggregation of stress-denatured proteins, in association with DnaK and GrpE. It is the nucleotide exchange factor for DnaK and may function as a thermosensor. Unfolded proteins bind initially to DnaJ; upon interaction with the DnaJ-bound protein, DnaK hydrolyzes its bound ATP, resulting in the formation of a stable complex. GrpE releases ADP from DnaK; ATP binding to DnaK triggers the release of the substrate protein, thus completing the reaction cycle. Several rounds of ATP-dependent interactions between DnaJ, DnaK and GrpE are required for fully efficient folding. The chain is Protein GrpE from Clostridium acetobutylicum (strain ATCC 824 / DSM 792 / JCM 1419 / IAM 19013 / LMG 5710 / NBRC 13948 / NRRL B-527 / VKM B-1787 / 2291 / W).